A 239-amino-acid polypeptide reads, in one-letter code: Fatty acid metabolism regulator protein (239 aa).

In terms of domain architecture, HTH gntR-type spans 6-74; sequence QSPAGFAEEY…HGKPTKVNNF (69 aa). Residues 34–53 constitute a DNA-binding region (H-T-H motif); sequence ERELSELIGVTRTTLREVLQ.

In terms of assembly, homodimer.

The protein resides in the cytoplasm. Its function is as follows. Multifunctional regulator of fatty acid metabolism. This is Fatty acid metabolism regulator protein from Salmonella paratyphi C (strain RKS4594).